A 122-amino-acid polypeptide reads, in one-letter code: UPF0231 protein VSAL_I2591 (122 aa).

Belongs to the UPF0231 family.

This Aliivibrio salmonicida (strain LFI1238) (Vibrio salmonicida (strain LFI1238)) protein is UPF0231 protein VSAL_I2591.